The following is a 131-amino-acid chain: uncharacterized protein (131 aa).

The N-terminal stretch at 1–19 (MRESLFIIFFQFVCHSSNS) is a signal peptide. Helical transmembrane passes span 33–53 (PLLTWTAPSIDLALSILALFF) and 111–131 (VSFNGDLIIIFVGETIFFFLF).

It localises to the membrane. This is an uncharacterized protein from Saccharomyces cerevisiae (strain ATCC 204508 / S288c) (Baker's yeast).